Here is a 165-residue protein sequence, read N- to C-terminus: Shikimate kinase (165 aa).

An ATP-binding site is contributed by 11–16 (GAGKTT). T15 is a Mg(2+) binding site. Substrate contacts are provided by D33, R57, and G78. Residue R116 coordinates ATP. R134 serves as a coordination point for substrate.

Belongs to the shikimate kinase family. Monomer. Requires Mg(2+) as cofactor.

It is found in the cytoplasm. The enzyme catalyses shikimate + ATP = 3-phosphoshikimate + ADP + H(+). Its pathway is metabolic intermediate biosynthesis; chorismate biosynthesis; chorismate from D-erythrose 4-phosphate and phosphoenolpyruvate: step 5/7. Catalyzes the specific phosphorylation of the 3-hydroxyl group of shikimic acid using ATP as a cosubstrate. The chain is Shikimate kinase from Bacillus cereus (strain AH187).